A 203-amino-acid chain; its full sequence is uncharacterized protein (203 aa).

Belongs to the mimivirus L332/L333/L334 family.

This is an uncharacterized protein from Acanthamoeba polyphaga mimivirus (APMV).